Here is a 363-residue protein sequence, read N- to C-terminus: tRNA U34 carboxymethyltransferase (363 aa).

Residues lysine 101, tryptophan 134, lysine 139, glycine 159, 181–183, 221–222, methionine 237, tyrosine 241, and arginine 356 contribute to the carboxy-S-adenosyl-L-methionine site; these read DPS and LE.

This sequence belongs to the class I-like SAM-binding methyltransferase superfamily. CmoB family. In terms of assembly, homotetramer.

It carries out the reaction carboxy-S-adenosyl-L-methionine + 5-hydroxyuridine(34) in tRNA = 5-carboxymethoxyuridine(34) in tRNA + S-adenosyl-L-homocysteine + H(+). Functionally, catalyzes carboxymethyl transfer from carboxy-S-adenosyl-L-methionine (Cx-SAM) to 5-hydroxyuridine (ho5U) to form 5-carboxymethoxyuridine (cmo5U) at position 34 in tRNAs. The chain is tRNA U34 carboxymethyltransferase from Psychrobacter cryohalolentis (strain ATCC BAA-1226 / DSM 17306 / VKM B-2378 / K5).